The following is a 392-amino-acid chain: ERBB-3 BINDING PROTEIN 1 (392 aa).

Necessary for nucleolar localization regions lie at residues 1–50 (MSSD…IVDI) and 298–392 (HLQP…NAQE). The segment at 48–56 (VDICEKGDS) is RNA-binding. The segment at 355–372 (GIKKKKGGGKKKKAQKAG) is interaction with RNA. A Nuclear localization signal motif is present at residues 357–367 (KKKKGGGKKKK). Positions 358–369 (KKKGGGKKKKAQ) are enriched in basic residues. The tract at residues 358–392 (KKKGGGKKKKAQKAGEKGEASTEAEPMDASSNAQE) is disordered.

This sequence belongs to the peptidase M24 family. As to quaternary structure, component of a ribonucleoprotein complex. Interacts with REIL1 and REIL2. Strongly expressed in calls, roots and flowers, to a lower extent, in stems and siliques, but hardly detectable in leaves.

The protein resides in the nucleus. Binds RNA. Associates with 28S, 18S and 5.8S mature rRNAs, several rRNA precursors and probably U3 small nucleolar RNA. May be involved in regulation of intermediate and late steps of rRNA processing. May be involved in ribosome assembly. Required for expression of cell cycle genes such as CYCD3-1, RNR2A and CDKB1-1. Promotes, in a dose- and auxin-dependent manner, organ growth by stimulating both cell proliferation and expansion, via the regulation of RBR1 levels. This chain is ERBB-3 BINDING PROTEIN 1, found in Arabidopsis thaliana (Mouse-ear cress).